The sequence spans 124 residues: Riboflavin kinase (124 aa).

G10–A15 contacts CDP. Positions 39 and 41 each coordinate Mg(2+). Residues T93 and E101 each contribute to the FMN site. D106 to R109 serves as a coordination point for CDP.

The protein belongs to the archaeal riboflavin kinase family. It depends on Mg(2+) as a cofactor.

It catalyses the reaction riboflavin + CTP = CDP + FMN + H(+). It functions in the pathway cofactor biosynthesis; FMN biosynthesis; FMN from riboflavin (CTP route): step 1/1. Its function is as follows. Catalyzes the CTP-dependent phosphorylation of riboflavin (vitamin B2) to form flavin mononucleotide (FMN). The chain is Riboflavin kinase from Methanobrevibacter smithii (strain ATCC 35061 / DSM 861 / OCM 144 / PS).